The primary structure comprises 203 residues: DNA-directed RNA polymerase subunit gamma (203 aa).

Residues cysteine 34, cysteine 36, cysteine 49, and cysteine 52 each coordinate Zn(2+).

The protein belongs to the RNA polymerase beta' chain family. RpoC1 subfamily. In cyanobacteria the RNAP catalytic core is composed of 2 alpha, 1 beta, 1 beta', 1 gamma and 1 omega subunit. When a sigma factor is associated with the core the holoenzyme is formed, which can initiate transcription. The cofactor is Zn(2+).

The enzyme catalyses RNA(n) + a ribonucleoside 5'-triphosphate = RNA(n+1) + diphosphate. Its function is as follows. DNA-dependent RNA polymerase catalyzes the transcription of DNA into RNA using the four ribonucleoside triphosphates as substrates. The protein is DNA-directed RNA polymerase subunit gamma (rpoC1) of Prochloron sp.